Consider the following 301-residue polypeptide: Protein ARMCX6 (301 aa).

The interval 1 to 6 (MGRARE) is mitochondrion outer membrane (MOM)-targeting sequence. At 1–7 (MGRAREM) the chain is on the mitochondrial intermembrane side. The helical; Signal-anchor transmembrane segment at 8-25 (GWMAAGLMIGAGACYCMY) threads the bilayer. The mitochondrion outer membrane (MOM)-targeting sequence stretch occupies residues 26–36 (KLTMGRDEGNE). The Cytoplasmic segment spans residues 26-301 (KLTMGRDEGN…REMLVEAISP (276 aa)). The segment at 70 to 105 (SEDGEWDEPGAPGGTEDRRSGGGKANRAHPTKQRPF) is disordered.

This sequence belongs to the eutherian X-chromosome-specific Armcx family.

The protein localises to the mitochondrion. It localises to the mitochondrion outer membrane. Functionally, may regulate the dynamics and distribution of mitochondria in neural cells. This chain is Protein ARMCX6 (Armcx6), found in Rattus norvegicus (Rat).